The chain runs to 1358 residues: MGADGETVVLKNMLIGINLILLGSMIKPSECQLEVTTERVQRQSVEEEGGIANYNTSSKEQPVVFNHVYNINVPLDNLCSSGLEASAEQEVSAEDETLAEYMGQTSDHESQVTFTHRINFPKKACPCASSAQVLQELLSRIEMLEREVSVLRDQCNANCCQESAATGQLDYIPHCSGHGNFSFESCGCICNEGWFGKNCSEPYCPLGCSSRGVCVDGQCICDSEYSGDDCSELRCPTDCSSRGLCVDGECVCEEPYTGEDCRELRCPGDCSGKGRCANGTCLCEEGYVGEDCGQRQCLNACSGRGQCEEGLCVCEEGYQGPDCSAVAPPEDLRVAGISDRSIELEWDGPMAVTEYVISYQPTALGGLQLQQRVPGDWSGVTITELEPGLTYNISVYAVISNILSLPITAKVATHLSTPQGLQFKTITETTVEVQWEPFSFSFDGWEISFIPKNNEGGVIAQVPSDVTSFNQTGLKPGEEYIVNVVALKEQARSPPTSASVSTVIDGPTQILVRDVSDTVAFVEWIPPRAKVDFILLKYGLVGGEGGRTTFRLQPPLSQYSVQALRPGSRYEVSVSAVRGTNESDSATTQFTTEIDAPKNLRVGSRTATSLDLEWDNSEAEVQEYKVVYSTLAGEQYHEVLVPRGIGPTTRATLTDLVPGTEYGVGISAVMNSQQSVPATMNARTELDSPRDLMVTASSETSISLIWTKASGPIDHYRITFTPSSGIASEVTVPKDRTSYTLTDLEPGAEYIISVTAERGRQQSLESTVDAFTGFRPISHLHFSHVTSSSVNITWSDPSPPADRLILNYSPRDEEEEMMEVSLDATKRHAVLMGLQPATEYIVNLVAVHGTVTSEPIVGSITTGIDPPKDITISNVTKDSVMVSWSPPVASFDYYRVSYRPTQVGRLDSSVVPNTVTEFTITRLNPATEYEISLNSVRGREESERICTLVHTAMDNPVDLIATNITPTEALLQWKAPVGEVENYVIVLTHFAVAGETILVDGVSEEFRLVDLLPSTHYTATMYATNGPLTSGTISTNFSTLLDPPANLTASEVTRQSALISWQPPRAEIENYVLTYKSTDGSRKELIVDAEDTWIRLEGLLENTDYTVLLQAAQDTTWSSITSTAFTTGGRVFPHPQDCAQHLMNGDTLSGVYPIFLNGELSQKLQVYCDMTTDGGGWIVFQRRQNGQTDFFRKWADYRVGFGNVEDEFWLGLDNIHRITSQGRYELRVDMRDGQEAAFASYDRFSVEDSRNLYKLRIGSYNGTAGDSLSYHQGRPFSTEDRDNDVAVTNCAMSYKGAWWYKNCHRTNLNGKYGESRHSQGINWYHWKGHEFSIPFVEMKMRPYNHRLMAGRKRQSLQF.

The signal sequence occupies residues 1–31 (MGADGETVVLKNMLIGINLILLGSMIKPSEC). O-linked (GalNAc...) threonine glycans are attached at residues Thr36 and Thr37. Asn55 is a glycosylation site (N-linked (GlcNAc...) asparagine). A coiled-coil region spans residues 127–157 (CASSAQVLQELLSRIEMLEREVSVLRDQCNA). The O-linked (Xyl...) (chondroitin sulfate) serine glycan is linked to Ser176. Asn180 and Asn198 each carry an N-linked (GlcNAc...) asparagine glycan. 3 EGF-like domains span residues 188–199 (CICNEGWFGKNC), 219–230 (CICDSEYSGDDC), and 250–261 (CVCEEPYTGEDC). O-linked (Xyl...) (chondroitin sulfate) serine glycosylation is present at Ser271. The N-linked (GlcNAc...) asparagine glycan is linked to Asn278. Positions 281–292 (CLCEEGYVGEDC) constitute an EGF-like 4 domain. Cystine bridges form between Cys292-Cys301, Cys297-Cys312, and Cys314-Cys323. Ser302 is a glycosylation site (O-linked (Xyl...) (chondroitin sulfate) serine). Residues 312 to 323 (CVCEEGYQGPDC) enclose the EGF-like 5 domain. Fibronectin type-III domains follow at residues 328 to 420 (PPED…TPQG), 421 to 505 (LQFK…TVID), 506 to 595 (GPTQ…TEID), 596 to 687 (APKN…TELD), 688 to 777 (SPRD…FRPI), 778 to 865 (SHLH…TGID), 866 to 955 (PPKD…AMDN), 956 to 1042 (PVDL…TLLD), and 1043 to 1130 (PPAN…TGGR). Residues Asn392, Asn470, and Asn581 are each glycosylated (N-linked (GlcNAc...) asparagine). Position 724 is a phosphoserine (Ser724). 5 N-linked (GlcNAc...) asparagine glycosylation sites follow: Asn791, Asn874, Asn1036, Asn1046, and Asn1261. The Fibrinogen C-terminal domain occupies 1129 to 1344 (GRVFPHPQDC…FVEMKMRPYN (216 aa)).

The protein belongs to the tenascin family. Forms oligomers. Interacts with CNTN1, TNC, and FN1. Interacts with BCAN and ACAN in a calcium-dependent manner. Interacts with SCN2B, PTPRZ1, and CSPG3. In terms of processing, contains N-linked oligosaccharides, O-linked sialylated structures and O-linked chondroitin sulfate glycosaminoglycans. Contains N-linked oligosaccharides with a sulfated carbohydrate structure. O-glycosylated on Thr-36 or Thr-37 with a core 1 or possibly core 8 glycan. Brain specific.

The protein resides in the secreted. The protein localises to the extracellular space. It localises to the extracellular matrix. Neural extracellular matrix (ECM) protein involved in interactions with different cells and matrix components. These interactions can influence cellular behavior by either evoking a stable adhesion and differentiation, or repulsion and inhibition of neurite growth. Binding to cell surface gangliosides inhibits RGD-dependent integrin-mediated cell adhesion and results in an inhibition of PTK2/FAK1 (FAK) phosphorylation and cell detachment. Binding to membrane surface sulfatides results in a oligodendrocyte adhesion and differentiation. Interaction with CNTN1 induces a repulsion of neurons and an inhibition of neurite outgrowth. Interacts with SCN2B may play a crucial role in clustering and regulation of activity of sodium channels at nodes of Ranvier. TNR-linked chondroitin sulfate glycosaminoglycans are involved in the interaction with FN1 and mediate inhibition of cell adhesion and neurite outgrowth. The highly regulated addition of sulfated carbohydrate structure may modulate the adhesive properties of TNR over the course of development and during synapse maintenance. This is Tenascin-R (TNR) from Homo sapiens (Human).